Reading from the N-terminus, the 526-residue chain is Fumitremorgin C synthase (526 aa).

A helical membrane pass occupies residues 4 to 24 (LPLSPAVLFLIIVLPILYLWI). C443 provides a ligand contact to heme.

It belongs to the cytochrome P450 family. The cofactor is heme.

It is found in the membrane. The catalysed reaction is tryprostatin A + reduced [NADPH--hemoprotein reductase] + O2 = fumitremorgin C + oxidized [NADPH--hemoprotein reductase] + 2 H2O + H(+). The protein operates within mycotoxin biosynthesis. Functionally, cytochrome P450 monooxygenase; part of the gene cluster that mediates the biosynthesis of fumitremorgins, indole alkaloids that carry not only intriguing chemical structures, but also interesting biological and pharmacological activities. The biosynthesis of fumitremorgin-type alkaloids begins by condensation of the two amino acids L-tryptophan and L-proline to brevianamide F, catalyzed by the non-ribosomal peptide synthetase ftmA. Brevianamide F is then prenylated by the prenyltransferase ftmPT1/ftmB in the presence of dimethylallyl diphosphate, resulting in the formation of tryprostatin B. The three cytochrome P450 monooxygenases, ftmP450-1/ftmC, ftmP450-2/ftmE and ftmP450-3/FtmG, are responsible for the conversion of tryprostatin B to 6-hydroxytryprostatin B, tryprostatin A to fumitremorgin C and fumitremorgin C to 12,13-dihydroxyfumitremorgin C, respectively. The putative methyltransferase ftmMT/ftmD is expected for the conversion of 6-hydroxytryprostatin B to tryprostatin A. FtmPT2/FtmH catalyzes the prenylation of 12,13-dihydroxyfumitre-morgin C in the presence of dimethylallyl diphosphate, resulting in the formation of fumitremorgin B. Fumitremorgin B is further converted to verruculogen by ftmOx1/ftmF via the insertion of an endoperoxide bond between the two prenyl moieties. In some fungal species, verruculogen is further converted to fumitremorgin A, but the enzymes involved in this step have not been identified yet. This Aspergillus fumigatus (Neosartorya fumigata) protein is Fumitremorgin C synthase.